The following is a 218-amino-acid chain: MIP18 family protein galla-1 (218 aa).

The segment at 1-59 (MLSYIKRKLSESDSGVSSVATVTSSCGGDSGRAGGTGSSESGTGSSSASISGRSQNADE) is disordered. Low complexity predominate over residues 12 to 27 (SDSGVSSVATVTSSCG). A Phosphoserine modification is found at S14. A compositionally biased stretch (gly residues) spans 28–37 (GDSGRAGGTG). Positions 38-54 (SSESGTGSSSASISGRS) are enriched in low complexity. S65 carries the post-translational modification Phosphoserine.

It belongs to the MIP18 family. Component of the CGX complex composed of crb, galla (galla-1 or galla-2) and Xpd. Interacts with crb (via intracellular domain). Is not able to interact with Xpd in the absence of crb.

It is found in the apical cell membrane. It localises to the cytoplasm. Its subcellular location is the cytoskeleton. The protein resides in the spindle. Functionally, component of the crb-galla-Xpd (CGX) complex which is essential for proper mitotic chromosome segregation in early embryos. The CGX complex is also required for cell proliferation in developing wing disks. In the CGX complex, acts with crb to recruit Xpd thus forming the functional complex. The polypeptide is MIP18 family protein galla-1 (Drosophila melanogaster (Fruit fly)).